Reading from the N-terminus, the 184-residue chain is Cysteine-rich atrial secretory protein (184 aa).

The first 26 residues, 1–26 (MATFQAHFFAAVMCVGVLGLSKLCGA), serve as a signal peptide directing secretion. Intrachain disulfides connect Cys29-Cys34, Cys65-Cys111, Cys75-Cys82, Cys123-Cys155, and Cys135-Cys144. Asn74 is a glycosylation site (N-linked (GlcNAc...) asparagine).

In terms of processing, N-glycosylated. Highly expressed in atrium. Moderately expressed in the pericardium, pulmonary vein, nephridium, arteria anterior, ovotestis and connective tissue. Low expression found in intestine, lung plexus, diaphragm, subesophageal ganglion, ventricle and digestive gland. Very low expression found in columellar retractor, pedal nerves and cerebral ganglion. Not expressed in hemocytes.

It is found in the secreted. The protein is Cysteine-rich atrial secretory protein of Achatina achatina (Giant Ghana snail).